A 527-amino-acid polypeptide reads, in one-letter code: Putative ABC transporter peptide-binding protein BOV_A0352 (527 aa).

Positions methionine 1–alanine 23 are cleaved as a signal peptide.

This sequence belongs to the bacterial solute-binding protein 5 family. As to quaternary structure, the complex is composed of two ATP-binding proteins (BOV_A0347 and BOV_A0348), two transmembrane proteins (BOV_A0350 and BOV_A0351) and a solute-binding protein (BOV_A0352).

It is found in the periplasm. Functionally, probably part of an ABC transporter complex that could be involved in peptide import. The chain is Putative ABC transporter peptide-binding protein BOV_A0352 from Brucella ovis (strain ATCC 25840 / 63/290 / NCTC 10512).